The primary structure comprises 487 residues: Siroheme synthase (487 aa).

The precorrin-2 dehydrogenase /sirohydrochlorin ferrochelatase stretch occupies residues 1–203; that stretch reads MNTFPLFFKL…GRSVEAEQAL (203 aa). NAD(+) is bound by residues 22–23 and 43–44; these read EV and PQ. S128 is modified (phosphoserine). The tract at residues 229-487 is uroporphyrinogen-III C-methyltransferase; that stretch reads GEVYIVGAGP…DQQAHALNML (259 aa). Residue P238 coordinates S-adenosyl-L-methionine. Residue D261 is the Proton acceptor of the active site. Catalysis depends on K283, which acts as the Proton donor. Residues 314 to 316, V319, 344 to 345, M396, and A425 each bind S-adenosyl-L-methionine; these read GGD and TA.

It in the N-terminal section; belongs to the precorrin-2 dehydrogenase / sirohydrochlorin ferrochelatase family. The protein in the C-terminal section; belongs to the precorrin methyltransferase family.

The catalysed reaction is uroporphyrinogen III + 2 S-adenosyl-L-methionine = precorrin-2 + 2 S-adenosyl-L-homocysteine + H(+). The enzyme catalyses precorrin-2 + NAD(+) = sirohydrochlorin + NADH + 2 H(+). It catalyses the reaction siroheme + 2 H(+) = sirohydrochlorin + Fe(2+). The protein operates within cofactor biosynthesis; adenosylcobalamin biosynthesis; precorrin-2 from uroporphyrinogen III: step 1/1. It participates in cofactor biosynthesis; adenosylcobalamin biosynthesis; sirohydrochlorin from precorrin-2: step 1/1. Its pathway is porphyrin-containing compound metabolism; siroheme biosynthesis; precorrin-2 from uroporphyrinogen III: step 1/1. It functions in the pathway porphyrin-containing compound metabolism; siroheme biosynthesis; siroheme from sirohydrochlorin: step 1/1. The protein operates within porphyrin-containing compound metabolism; siroheme biosynthesis; sirohydrochlorin from precorrin-2: step 1/1. Functionally, multifunctional enzyme that catalyzes the SAM-dependent methylations of uroporphyrinogen III at position C-2 and C-7 to form precorrin-2 via precorrin-1. Then it catalyzes the NAD-dependent ring dehydrogenation of precorrin-2 to yield sirohydrochlorin. Finally, it catalyzes the ferrochelation of sirohydrochlorin to yield siroheme. This chain is Siroheme synthase, found in Psychrobacter sp. (strain PRwf-1).